The following is a 342-amino-acid chain: NADPH-dependent methylglyoxal reductase GRE2 (342 aa).

NADP(+) contacts are provided by residues 7–12, Arg32, Lys36, 57–58, Tyr165, Lys169, Val199, and Ser216; these read GANGFI and DI. Lys169 functions as the Proton donor in the catalytic mechanism. Residue Ser333 is modified to Phosphoserine.

It belongs to the NAD(P)-dependent epimerase/dehydratase family. Dihydroflavonol-4-reductase subfamily. In terms of assembly, monomer. Post-translationally, the N-terminus is blocked.

Its subcellular location is the cytoplasm. The protein localises to the nucleus. The catalysed reaction is (S)-lactaldehyde + NADP(+) = methylglyoxal + NADPH + H(+). The enzyme catalyses 3-methylbutanol + NADP(+) = 3-methylbutanal + NADPH + H(+). It carries out the reaction 2,5-hexanedione + 2 NADPH + 2 H(+) = (2S,5S)-hexanediol + 2 NADP(+). It catalyses the reaction (S)-3-chloro-1-phenyl-1-propanol + NADP(+) = 3-chloro-1-phenyl-1-propanone + NADPH + H(+). Its activity is regulated as follows. Activated by glutathione. Functionally, catalyzes the irreversible reduction of the cytotoxic compound methylglyoxal (MG, 2-oxopropanal) to (S)-lactaldehyde as an alternative to detoxification of MG by glyoxalase I GLO1. MG is synthesized via a bypath of glycolysis from dihydroxyacetone phosphate and is believed to play a role in cell cycle regulation and stress adaptation. Also catalyzes the reduction of 3-methylbutanal to 3-methylbutanol. Acts as a suppressor of 3-methylbutanol-induced filamentation by modulating the levels of 3-methylbutanal, the signal to which cells respond by filamentation. Also involved in ergosterol metabolism. The chain is NADPH-dependent methylglyoxal reductase GRE2 (GRE2) from Saccharomyces cerevisiae (strain ATCC 204508 / S288c) (Baker's yeast).